The following is a 107-amino-acid chain: Nucleoid-associated protein Msil_0275 (107 aa).

The protein belongs to the YbaB/EbfC family. Homodimer.

Its subcellular location is the cytoplasm. It localises to the nucleoid. Its function is as follows. Binds to DNA and alters its conformation. May be involved in regulation of gene expression, nucleoid organization and DNA protection. The protein is Nucleoid-associated protein Msil_0275 of Methylocella silvestris (strain DSM 15510 / CIP 108128 / LMG 27833 / NCIMB 13906 / BL2).